Consider the following 99-residue polypeptide: Ferredoxin (99 aa).

Residues 4 to 96 (YKIHLLCEEE…DCTISTHVEQ (93 aa)) enclose the 2Fe-2S ferredoxin-type domain. [2Fe-2S] cluster is bound by residues Cys42, Cys47, Cys50, and Cys80.

This sequence belongs to the 2Fe2S plant-type ferredoxin family. As to quaternary structure, forms a complex with heterodimeric ferredoxin-thioredoxin reductase (FTR) and thioredoxin. Requires [2Fe-2S] cluster as cofactor.

It localises to the plastid. The protein localises to the chloroplast. Functionally, ferredoxins are iron-sulfur proteins that transfer electrons in a wide variety of metabolic reactions. The polypeptide is Ferredoxin (petF) (Pyropia yezoensis (Susabi-nori)).